The sequence spans 118 residues: Large ribosomal subunit protein bL19 (118 aa).

It belongs to the bacterial ribosomal protein bL19 family.

Its function is as follows. This protein is located at the 30S-50S ribosomal subunit interface and may play a role in the structure and function of the aminoacyl-tRNA binding site. This Hahella chejuensis (strain KCTC 2396) protein is Large ribosomal subunit protein bL19.